Here is a 966-residue protein sequence, read N- to C-terminus: Catenin alpha-2 (966 aa).

A compositionally biased stretch (basic and acidic residues) spans 924–940; sequence PEKKPLVKREKPEEYQT. Residues 924-952 form a disordered region; it reads PEKKPLVKREKPEEYQTRVRRGSQKKHIS. Positions 941 to 951 are enriched in basic residues; that stretch reads RVRRGSQKKHI.

Belongs to the vinculin/alpha-catenin family.

Its subcellular location is the cell membrane. The protein resides in the cytoplasm. The protein localises to the cytoskeleton. It localises to the cell junction. It is found in the adherens junction. Its subcellular location is the cell projection. The protein resides in the axon. The protein localises to the nucleus. Its function is as follows. May function as a linker between cadherin adhesion receptors and the cytoskeleton to regulate cell-cell adhesion and differentiation in the nervous system. The polypeptide is Catenin alpha-2 (ctnna2) (Xenopus tropicalis (Western clawed frog)).